The following is a 225-amino-acid chain: Protein-L-isoaspartate O-methyltransferase (225 aa).

Ser75 is an active-site residue.

Belongs to the methyltransferase superfamily. L-isoaspartyl/D-aspartyl protein methyltransferase family.

Its subcellular location is the cytoplasm. The catalysed reaction is [protein]-L-isoaspartate + S-adenosyl-L-methionine = [protein]-L-isoaspartate alpha-methyl ester + S-adenosyl-L-homocysteine. Functionally, catalyzes the methyl esterification of L-isoaspartyl residues in peptides and proteins that result from spontaneous decomposition of normal L-aspartyl and L-asparaginyl residues. It plays a role in the repair and/or degradation of damaged proteins. The chain is Protein-L-isoaspartate O-methyltransferase from Stenotrophomonas maltophilia (strain K279a).